Consider the following 308-residue polypeptide: Cell division protein FtsQ (308 aa).

The Cytoplasmic portion of the chain corresponds to 1 to 53 (MDSGGRIVYALNVEKTGFLRILSVTVLQRLYRRVFWFLFKCVAGIDVPRHAGS). The chain crosses the membrane as a helical span at residues 54–74 (LAVFSFFFLSILYSISSGGYM). Topologically, residues 75-308 (NHFMKVAISN…LLKMLKAGSV (234 aa)) are periplasmic. A POTRA domain is found at 87–155 (FLVTHVDMSG…DRLRISLVER (69 aa)).

This sequence belongs to the FtsQ/DivIB family. FtsQ subfamily.

The protein resides in the cell inner membrane. Essential cell division protein. The chain is Cell division protein FtsQ from Bartonella bacilliformis.